The primary structure comprises 345 residues: Nicotinate-nucleotide--dimethylbenzimidazole phosphoribosyltransferase (345 aa).

Glu312 serves as the catalytic Proton acceptor.

Belongs to the CobT family.

It carries out the reaction 5,6-dimethylbenzimidazole + nicotinate beta-D-ribonucleotide = alpha-ribazole 5'-phosphate + nicotinate + H(+). It functions in the pathway nucleoside biosynthesis; alpha-ribazole biosynthesis; alpha-ribazole from 5,6-dimethylbenzimidazole: step 1/2. Functionally, catalyzes the synthesis of alpha-ribazole-5'-phosphate from nicotinate mononucleotide (NAMN) and 5,6-dimethylbenzimidazole (DMB). The sequence is that of Nicotinate-nucleotide--dimethylbenzimidazole phosphoribosyltransferase from Bacteroides fragilis (strain YCH46).